Consider the following 789-residue polypeptide: Disintegrin and metalloproteinase domain-containing protein 7 (789 aa).

Positions 1-23 (MLTTGIFWMTVLISHIQERGIVG) are cleaved as a signal peptide. A propeptide spanning residues 24–176 (VEGQELVHPK…NHSCVGLNFT (153 aa)) is cleaved from the precursor. Residues 24 to 667 (VEGQELVHPK…EWGEALNLTS (644 aa)) lie on the Extracellular side of the membrane. 3 N-linked (GlcNAc...) asparagine glycosylation sites follow: N84, N167, and N174. In terms of domain architecture, Peptidase M12B spans 199-393 (KFIELFVVAD…QKPACILNNP (195 aa)). 4 disulfide bridges follow: C310-C388, C350-C372, C352-C357, and C459-C479. The Disintegrin domain occupies 401 to 487 (YPFCGNKKVD…ECPKDEFQAN (87 aa)). N583, N628, and N664 each carry an N-linked (GlcNAc...) asparagine glycan. A helical membrane pass occupies residues 668–689 (VSIMVIVLVMVIIGVGLVILLI). Residues 690–789 (RYQKCIKMKQ…DTQSGCERLG (100 aa)) lie on the Cytoplasmic side of the membrane. The tract at residues 764–789 (RGIADPKQTDNVNLNLDTQSGCERLG) is disordered. Residues 772–789 (TDNVNLNLDTQSGCERLG) are compositionally biased toward polar residues.

In terms of assembly, interacts with ITM2B in sperm; the interaction increases following capacitation. Interacts with HSPA5 and CANX. In terms of tissue distribution, expressed in both the head and tails of sperm (at protein level). Expressed in the epididymis (at protein level). Abundantly expressed in the apical region of the proximal caput epididymal epithelium, with decreasing expression in the mid and distal caput epididymal epithelium.

The protein resides in the membrane. In terms of biological role, required for normal male fertility via maintenance of epithelial cell morphology in the caput epididymis and subsequently correct epididymis lumen structure required for sperm development. Plays a role in sperm motility, flagella morphology and tyrosine phosphorylation during sperm capacitance. Plays a role in normal expression levels of HSPA5, ITM2B and ADAM2 in sperm both prior to and post-capacitation. This is a non catalytic metalloprotease-like protein. The chain is Disintegrin and metalloproteinase domain-containing protein 7 from Mus musculus (Mouse).